We begin with the raw amino-acid sequence, 48 residues long: Fimbrial assembly protein, serogroup A1 (48 aa).

The sequence is that of Fimbrial assembly protein, serogroup A1 (fimB) from Dichelobacter nodosus (Bacteroides nodosus).